The sequence spans 377 residues: Succinyl-diaminopimelate desuccinylase (377 aa).

Position 66 (His66) interacts with Zn(2+). Asp68 is an active-site residue. Position 99 (Asp99) interacts with Zn(2+). Residue Glu133 is the Proton acceptor of the active site. 3 residues coordinate Zn(2+): Glu134, Glu163, and His349.

This sequence belongs to the peptidase M20A family. DapE subfamily. In terms of assembly, homodimer. Requires Zn(2+) as cofactor. Co(2+) is required as a cofactor.

The catalysed reaction is N-succinyl-(2S,6S)-2,6-diaminopimelate + H2O = (2S,6S)-2,6-diaminopimelate + succinate. Its pathway is amino-acid biosynthesis; L-lysine biosynthesis via DAP pathway; LL-2,6-diaminopimelate from (S)-tetrahydrodipicolinate (succinylase route): step 3/3. In terms of biological role, catalyzes the hydrolysis of N-succinyl-L,L-diaminopimelic acid (SDAP), forming succinate and LL-2,6-diaminopimelate (DAP), an intermediate involved in the bacterial biosynthesis of lysine and meso-diaminopimelic acid, an essential component of bacterial cell walls. In Legionella pneumophila (strain Corby), this protein is Succinyl-diaminopimelate desuccinylase.